A 339-amino-acid polypeptide reads, in one-letter code: uncharacterized protein (339 aa).

Residues histidine 17, histidine 19, histidine 197, and aspartate 278 each coordinate Zn(2+). Position 279 (aspartate 279) interacts with substrate.

The protein belongs to the metallo-dependent hydrolases superfamily. Adenosine and AMP deaminases family. Adenine deaminase type 2 subfamily. It depends on Zn(2+) as a cofactor.

Its subcellular location is the cytoplasm. The protein resides in the nucleus. This is an uncharacterized protein from Schizosaccharomyces pombe (strain 972 / ATCC 24843) (Fission yeast).